The sequence spans 576 residues: Urease subunit alpha (576 aa).

Residues glycine 132–phenylalanine 576 form the Urease domain. Ni(2+) contacts are provided by histidine 137, histidine 139, and lysine 220. At lysine 220 the chain carries N6-carboxylysine. Residue histidine 222 coordinates substrate. Histidine 249 and histidine 275 together coordinate Ni(2+). Histidine 323 functions as the Proton donor in the catalytic mechanism. Residue aspartate 363 participates in Ni(2+) binding.

Belongs to the metallo-dependent hydrolases superfamily. Urease alpha subunit family. In terms of assembly, heterotrimer of UreA (gamma), UreB (beta) and UreC (alpha) subunits. Three heterotrimers associate to form the active enzyme. The cofactor is Ni cation. In terms of processing, carboxylation allows a single lysine to coordinate two nickel ions.

It is found in the cytoplasm. The catalysed reaction is urea + 2 H2O + H(+) = hydrogencarbonate + 2 NH4(+). The protein operates within nitrogen metabolism; urea degradation; CO(2) and NH(3) from urea (urease route): step 1/1. The sequence is that of Urease subunit alpha from Arthrobacter sp. (strain FB24).